A 136-amino-acid polypeptide reads, in one-letter code: Cytochrome b5 (136 aa).

In terms of domain architecture, Cytochrome b5 heme-binding spans threonine 5 to aspartate 81. Heme contacts are provided by histidine 40 and histidine 64. Residues phenylalanine 107 to isoleucine 127 form a helical membrane-spanning segment.

The protein belongs to the cytochrome b5 family. Is highly expressed in developing seeds, moderately expressed in flowers, and is expressed at low levels in the leaf.

It localises to the endoplasmic reticulum membrane. The protein localises to the microsome membrane. Its function is as follows. Cytochrome b5 is a membrane bound hemoprotein which function as an electron carrier for several membrane bound oxygenases. May play a key role in the modification by desaturation of fatty acids in the endoplasmic reticulum, which in the developing seed is utilized for membrane synthesis and in the developmentally regulated production of large amounts of storage lipids. Is involved in the reduction of cytochrome P-450 and may therefore be involved in flavonoid biosynthesis in the petals. In Nicotiana tabacum (Common tobacco), this protein is Cytochrome b5.